Consider the following 174-residue polypeptide: MNNYQLTINEVIEIINRNTDINKLVAKKDNLYPTDLYDLDKQQLIAIILNSDFALSSIKRALLEVTVEELGEQDNDDDLDEIDSELYEDAEASDVPHETIVKVFEADKSIVTFNGEKLKHYVNVDVDNSSVDEVKKIAKEISEHDFNDEDIEEAELKTFKNHLPTIYSMKKENK.

The protein belongs to the phi29likevirus protein p56 family. In terms of assembly, homodimer. Interacts with the histone-like protein p6; this interaction optimizes the binding of protein p6 at the viral DNA ends, thus favoring the initiation of replication.

Functionally, involved in the replication of viral DNA. It is required at the very beginning of the virus amplification, conditions in which a low number of viral DNA molecules enter the host cell, possibly to recruit the limiting amount of initiation factors at the replication origins. Once the infection process is established and the other replication proteins reach optimal concentration, it becomes dispensable. Optimizes the binding of protein p6 at the viral DNA ends, thus favoring the initiation of replication. The chain is DNA replication protein 17 (17) from Bacillus subtilis (Bacteriophage PZA).